The sequence spans 335 residues: Holliday junction branch migration complex subunit RuvB (335 aa).

Positions 4–184 are large ATPase domain (RuvB-L); it reads ADRIISGQAK…FGIVQRLEFY (181 aa). ATP is bound by residues I23, R24, G65, K68, T69, T70, 131–133, R174, Y184, and R221; that span reads EDY. T69 provides a ligand contact to Mg(2+). The tract at residues 185 to 255 is small ATPAse domain (RuvB-S); it reads SVEDLTSIVA…VAKQALSMLD (71 aa). Residues 258 to 335 form a head domain (RuvB-H) region; that stretch reads DAGFDYLDRK…RHFGLQKLSD (78 aa). 3 residues coordinate DNA: R294, R313, and R318.

The protein belongs to the RuvB family. In terms of assembly, homohexamer. Forms an RuvA(8)-RuvB(12)-Holliday junction (HJ) complex. HJ DNA is sandwiched between 2 RuvA tetramers; dsDNA enters through RuvA and exits via RuvB. An RuvB hexamer assembles on each DNA strand where it exits the tetramer. Each RuvB hexamer is contacted by two RuvA subunits (via domain III) on 2 adjacent RuvB subunits; this complex drives branch migration. In the full resolvosome a probable DNA-RuvA(4)-RuvB(12)-RuvC(2) complex forms which resolves the HJ.

Its subcellular location is the cytoplasm. It carries out the reaction ATP + H2O = ADP + phosphate + H(+). Functionally, the RuvA-RuvB-RuvC complex processes Holliday junction (HJ) DNA during genetic recombination and DNA repair, while the RuvA-RuvB complex plays an important role in the rescue of blocked DNA replication forks via replication fork reversal (RFR). RuvA specifically binds to HJ cruciform DNA, conferring on it an open structure. The RuvB hexamer acts as an ATP-dependent pump, pulling dsDNA into and through the RuvAB complex. RuvB forms 2 homohexamers on either side of HJ DNA bound by 1 or 2 RuvA tetramers; 4 subunits per hexamer contact DNA at a time. Coordinated motions by a converter formed by DNA-disengaged RuvB subunits stimulates ATP hydrolysis and nucleotide exchange. Immobilization of the converter enables RuvB to convert the ATP-contained energy into a lever motion, pulling 2 nucleotides of DNA out of the RuvA tetramer per ATP hydrolyzed, thus driving DNA branch migration. The RuvB motors rotate together with the DNA substrate, which together with the progressing nucleotide cycle form the mechanistic basis for DNA recombination by continuous HJ branch migration. Branch migration allows RuvC to scan DNA until it finds its consensus sequence, where it cleaves and resolves cruciform DNA. The polypeptide is Holliday junction branch migration complex subunit RuvB (Haemophilus influenzae (strain PittEE)).